The following is a 492-amino-acid chain: Trypanothione reductase (492 aa).

An FAD-binding site is contributed by 35–52 (DVQTVHGPPFFAALGGTC). Residues C52 and C57 are joined by a disulfide bond. The active-site Proton acceptor is H461.

This sequence belongs to the class-I pyridine nucleotide-disulfide oxidoreductase family. In terms of assembly, homodimer. FAD serves as cofactor.

It is found in the cytoplasm. The catalysed reaction is trypanothione + NADP(+) = trypanothione disulfide + NADPH + H(+). Functionally, trypanothione is the parasite analog of glutathione; this enzyme is the equivalent of glutathione reductase. This Trypanosoma congolense protein is Trypanothione reductase (TPR).